A 400-amino-acid polypeptide reads, in one-letter code: MRKLTVLGATGSIGSSTLSVAKQNSHQFEIVALGAGSNVQKMFELCCEWQPKYAAMADPISALALQRQLKSNSIRTDVFSGEEGLCHIAQLDEVDTVMAAIVGAAGLLPTMSAVKAGKRILLANKEALVMSGQLFIDAVEKYGAELLPVDSEHNAIFQCLPESIQRKLGRCDLDAHGVSSILLTGSGGPFRYTDISELVSVTPEMAIAHPNWSMGPKISVDSATMMNKGLEYIEARWLFNTTKEQLKVIIHPQSVIHSMVQYKDGSVLAQMGLPDMRTPIACTMSYPERISSGVEPLDFTKIGELSFLEPDYSRYPCLKLAIDACYSGQHATTGLNAANEQSVAAFLNNEIGFTDITRINEQVLNKVCANFQNLELDSLESLIDLDRMARNYADEALKKV.

Positions 10, 11, 12, 13, 36, 38, and 124 each coordinate NADPH. Lysine 125 contacts 1-deoxy-D-xylulose 5-phosphate. Glutamate 126 contacts NADPH. Aspartate 150 provides a ligand contact to Mn(2+). 4 residues coordinate 1-deoxy-D-xylulose 5-phosphate: serine 151, glutamate 152, serine 186, and histidine 209. A Mn(2+)-binding site is contributed by glutamate 152. Glycine 215 provides a ligand contact to NADPH. Serine 222, asparagine 227, lysine 228, and glutamate 231 together coordinate 1-deoxy-D-xylulose 5-phosphate. Mn(2+) is bound at residue glutamate 231.

The protein belongs to the DXR family. It depends on Mg(2+) as a cofactor. Mn(2+) serves as cofactor.

The catalysed reaction is 2-C-methyl-D-erythritol 4-phosphate + NADP(+) = 1-deoxy-D-xylulose 5-phosphate + NADPH + H(+). The protein operates within isoprenoid biosynthesis; isopentenyl diphosphate biosynthesis via DXP pathway; isopentenyl diphosphate from 1-deoxy-D-xylulose 5-phosphate: step 1/6. Its function is as follows. Catalyzes the NADPH-dependent rearrangement and reduction of 1-deoxy-D-xylulose-5-phosphate (DXP) to 2-C-methyl-D-erythritol 4-phosphate (MEP). In Aliivibrio salmonicida (strain LFI1238) (Vibrio salmonicida (strain LFI1238)), this protein is 1-deoxy-D-xylulose 5-phosphate reductoisomerase.